Here is a 450-residue protein sequence, read N- to C-terminus: Phosphoglucosamine mutase (450 aa).

The active-site Phosphoserine intermediate is Ser102. Mg(2+) is bound by residues Ser102, Asp243, Asp245, and Asp247. Ser102 is modified (phosphoserine).

Belongs to the phosphohexose mutase family. Requires Mg(2+) as cofactor. Post-translationally, activated by phosphorylation.

It catalyses the reaction alpha-D-glucosamine 1-phosphate = D-glucosamine 6-phosphate. Functionally, catalyzes the conversion of glucosamine-6-phosphate to glucosamine-1-phosphate. This Rhizobium leguminosarum bv. trifolii (strain WSM2304) protein is Phosphoglucosamine mutase.